Reading from the N-terminus, the 555-residue chain is Potassium-transporting ATPase potassium-binding subunit (555 aa).

10 helical membrane-spanning segments follow: residues 2–22, 60–80, 130–150, 173–193, 246–266, 278–298, 374–394, 412–432, 483–503, and 525–545; these read IWVA…PTGI, QYAL…YFIF, IGIT…VMAF, VFLP…VPQT, MSNI…PFTY, ILFV…TTSE, AGFV…GLMV, LIAV…ALAL, LVMF…AASL, and GIFI…MLVL.

The protein belongs to the KdpA family. The system is composed of three essential subunits: KdpA, KdpB and KdpC.

Its subcellular location is the cell membrane. Part of the high-affinity ATP-driven potassium transport (or Kdp) system, which catalyzes the hydrolysis of ATP coupled with the electrogenic transport of potassium into the cytoplasm. This subunit binds the extracellular potassium ions and delivers the ions to the membrane domain of KdpB through an intramembrane tunnel. The chain is Potassium-transporting ATPase potassium-binding subunit from Bacillus cereus (strain G9842).